We begin with the raw amino-acid sequence, 170 residues long: Small ribosomal subunit protein uS13 (170 aa).

Basic residues predominate over residues 128–140 (VRHKRGQKVRGQR). The segment at 128 to 170 (VRHKRGQKVRGQRTKSTGRTEGTIGVNVEAIKEEQAEDGGDEE) is disordered.

The protein belongs to the universal ribosomal protein uS13 family. As to quaternary structure, part of the 30S ribosomal subunit. Forms a loose heterodimer with protein S19. Forms two bridges to the 50S subunit in the 70S ribosome.

Functionally, located at the top of the head of the 30S subunit, it contacts several helices of the 16S rRNA. In the 70S ribosome it contacts the 23S rRNA (bridge B1a) and protein L5 of the 50S subunit (bridge B1b), connecting the 2 subunits; these bridges are implicated in subunit movement. This chain is Small ribosomal subunit protein uS13, found in Natronomonas pharaonis (strain ATCC 35678 / DSM 2160 / CIP 103997 / JCM 8858 / NBRC 14720 / NCIMB 2260 / Gabara) (Halobacterium pharaonis).